The primary structure comprises 451 residues: MRGTLATALLLVASCRIAAESNQINPQQASHHVGTTLNKLFTKSSPRRFLRDNREQRVALALTAANESRTIENAVTSAVHGITDASTTTAATRDAARDILNQHAFPKEGIRPQFDLNLPPSETSALLTGASNIPQRNHAFSSITSGIAVSSSRTSNQRTAKTQANLDMSHQGTVRKTLSKTQFKNPAASKSTKRRKKARIIPPFVVNKVDTLYREHLTAKSLEFDPTIKETEAMLKLYVESTVDPLPVSTVHFNHFRYFKDQDLTLLKEKLGTTLESALSTLAALNLPPGMLKAIERPFVWYASLARWRAMYCDFFEFLNANSNKIATSLPNVEFFGGETSSTVRDQLLATLKEEMKTRTKTRRNGKIMNDLKVVLAKYNVEEEIKAAIRGLGEQFLKRDHEIIPLQRHSRRSPASQSRSNNQRTGLTPYGLQIPGPERDSFRHIESNKHA.

A signal peptide spans 1–19 (MRGTLATALLLVASCRIAA). The RxLR-dEER signature appears at 48–69 (RFLRDNREQRVALALTAANESR). An N-linked (GlcNAc...) asparagine glycan is attached at asparagine 66. 2 stretches are compositionally biased toward polar residues: residues 175 to 184 (RKTLSKTQFK) and 413 to 426 (SPAS…QRTG). 2 disordered regions span residues 175–194 (RKTL…STKR) and 404–451 (IPLQ…NKHA). Residues 437–451 (PERDSFRHIESNKHA) are compositionally biased toward basic and acidic residues.

Belongs to the RxLR effector family.

The protein resides in the secreted. The protein localises to the host nucleus. Functionally, secreted effector that acts as an elicitor that induces cell death in host plant cells. The polypeptide is Secreted RxLR effector protein 111 (Plasmopara viticola (Downy mildew of grapevine)).